The primary structure comprises 116 residues: Ribosome-binding factor A (116 aa).

It belongs to the RbfA family. In terms of assembly, monomer. Binds 30S ribosomal subunits, but not 50S ribosomal subunits or 70S ribosomes.

It is found in the cytoplasm. In terms of biological role, one of several proteins that assist in the late maturation steps of the functional core of the 30S ribosomal subunit. Associates with free 30S ribosomal subunits (but not with 30S subunits that are part of 70S ribosomes or polysomes). Required for efficient processing of 16S rRNA. May interact with the 5'-terminal helix region of 16S rRNA. The polypeptide is Ribosome-binding factor A (Streptococcus sanguinis (strain SK36)).